A 94-amino-acid polypeptide reads, in one-letter code: Late cornified envelope-like proline-rich protein 1 (94 aa).

Disordered regions lie at residues Met-1 to Lys-26 and Cys-47 to Glu-94. The segment covering Pro-53 to Glu-94 has biased composition (pro residues).

Belongs to the cornifin (SPRR) family.

This Macaca fascicularis (Crab-eating macaque) protein is Late cornified envelope-like proline-rich protein 1 (LELP1).